Consider the following 430-residue polypeptide: MKRMKLRTNAGPLQGTIQVPGDKSISHRAVILGAVAKGETRVKGLLKGEDVLSTIQAFRNLGVRIEEKDDQLVIEGQGFQGLNAPCQTLNMGNSGTSMRLIAGLLAGQPFSVKMIGDESLSKRPMDRIVYPLKQMGVEISGETDRQFPPLQLQGNRNLQPITYTLPISSAQVKSAILLAALQAKGTTQVVEKEITRNHTEEMIQQFGGRLIVDGKRITLVGPQQLTAQEITVPGDISSAAFWLVAGLIIPGSELLLKNVGVNPTRTGILEVVEKMGAQIVYEDMNKKEQVTSIRVVYSNMKGTIISGGLIPRLIDELPIIALLATQAQGTTCIKDAQELRVKETDRIQVVTDILNSMGANIKATADGMIIKGPTVLYGANTSTYGDHRIGMMTAIAALLVKQGQVHLDKEEAIMTSYPTFFKDLERLCHD.

Lysine 23, serine 24, and arginine 28 together coordinate 3-phosphoshikimate. Lysine 23 is a binding site for phosphoenolpyruvate. Phosphoenolpyruvate-binding residues include glycine 95 and arginine 123. 3-phosphoshikimate-binding residues include serine 169, glutamine 171, aspartate 315, and lysine 342. Glutamine 171 provides a ligand contact to phosphoenolpyruvate. Aspartate 315 (proton acceptor) is an active-site residue. Phosphoenolpyruvate is bound by residues arginine 346 and arginine 388.

This sequence belongs to the EPSP synthase family. In terms of assembly, monomer.

Its subcellular location is the cytoplasm. It carries out the reaction 3-phosphoshikimate + phosphoenolpyruvate = 5-O-(1-carboxyvinyl)-3-phosphoshikimate + phosphate. Its pathway is metabolic intermediate biosynthesis; chorismate biosynthesis; chorismate from D-erythrose 4-phosphate and phosphoenolpyruvate: step 6/7. Catalyzes the transfer of the enolpyruvyl moiety of phosphoenolpyruvate (PEP) to the 5-hydroxyl of shikimate-3-phosphate (S3P) to produce enolpyruvyl shikimate-3-phosphate and inorganic phosphate. The polypeptide is 3-phosphoshikimate 1-carboxyvinyltransferase (Streptococcus pyogenes serotype M1).